The primary structure comprises 449 residues: UDP-N-acetylglucosamine 1-carboxyvinyltransferase (449 aa).

51-52 is a binding site for phosphoenolpyruvate; that stretch reads KN. Residue arginine 121 coordinates UDP-N-acetyl-alpha-D-glucosamine. Catalysis depends on cysteine 145, which acts as the Proton donor. The residue at position 145 (cysteine 145) is a 2-(S-cysteinyl)pyruvic acid O-phosphothioketal. UDP-N-acetyl-alpha-D-glucosamine is bound by residues 150–154, aspartate 333, and isoleucine 355; that span reads RPVDQ.

Belongs to the EPSP synthase family. MurA subfamily.

It is found in the cytoplasm. It catalyses the reaction phosphoenolpyruvate + UDP-N-acetyl-alpha-D-glucosamine = UDP-N-acetyl-3-O-(1-carboxyvinyl)-alpha-D-glucosamine + phosphate. It participates in cell wall biogenesis; peptidoglycan biosynthesis. Cell wall formation. Adds enolpyruvyl to UDP-N-acetylglucosamine. This chain is UDP-N-acetylglucosamine 1-carboxyvinyltransferase, found in Burkholderia mallei (strain ATCC 23344).